Here is a 984-residue protein sequence, read N- to C-terminus: Probable beta-galactosidase C (984 aa).

The first 23 residues, 1–23 (MRLLSFIYLVWLALLTGTPQVSA), serve as a signal peptide directing secretion. Substrate is bound by residues Y82, N127, A128, E129, and N187. Catalysis depends on E188, which acts as the Proton donor. Residue N197 is glycosylated (N-linked (GlcNAc...) asparagine). Position 251 (Y251) interacts with substrate. C257 and C304 are joined by a disulfide. The N-linked (GlcNAc...) asparagine glycan is linked to N276. The active-site Nucleophile is the E287. A substrate-binding site is contributed by Y353. Residues N391, N421, N434, N517, N602, N677, N715, N720, N759, and N805 are each glycosylated (N-linked (GlcNAc...) asparagine).

This sequence belongs to the glycosyl hydrolase 35 family.

It localises to the secreted. The enzyme catalyses Hydrolysis of terminal non-reducing beta-D-galactose residues in beta-D-galactosides.. Its function is as follows. Cleaves beta-linked terminal galactosyl residues from gangliosides, glycoproteins, and glycosaminoglycans. This chain is Probable beta-galactosidase C (lacC), found in Aspergillus oryzae (strain ATCC 42149 / RIB 40) (Yellow koji mold).